An 82-amino-acid chain; its full sequence is Sec-independent protein translocase protein TatA (82 aa).

The helical transmembrane segment at 1 to 21 (MGSLSIWHWLIVGAVVLLVFG) threads the bilayer. Residues 43 to 82 (GLSEDEEKAEAKPVGEPSLRSLDHQGAGDPLKTPDARKIG) form a disordered region.

This sequence belongs to the TatA/E family. The Tat system comprises two distinct complexes: a TatABC complex, containing multiple copies of TatA, TatB and TatC subunits, and a separate TatA complex, containing only TatA subunits. Substrates initially bind to the TatABC complex, which probably triggers association of the separate TatA complex to form the active translocon.

It localises to the cell inner membrane. Functionally, part of the twin-arginine translocation (Tat) system that transports large folded proteins containing a characteristic twin-arginine motif in their signal peptide across membranes. TatA could form the protein-conducting channel of the Tat system. The protein is Sec-independent protein translocase protein TatA of Methylocella silvestris (strain DSM 15510 / CIP 108128 / LMG 27833 / NCIMB 13906 / BL2).